Consider the following 431-residue polypeptide: Histidinol dehydrogenase (431 aa).

NAD(+) contacts are provided by Tyr-127, Gln-189, and Asn-212. Ser-237, Gln-259, and His-262 together coordinate substrate. Zn(2+)-binding residues include Gln-259 and His-262. Residues Glu-326 and His-327 each act as proton acceptor in the active site. His-327, Asp-360, Glu-414, and His-419 together coordinate substrate. Residue Asp-360 coordinates Zn(2+). Residue His-419 participates in Zn(2+) binding.

This sequence belongs to the histidinol dehydrogenase family. Zn(2+) is required as a cofactor.

It catalyses the reaction L-histidinol + 2 NAD(+) + H2O = L-histidine + 2 NADH + 3 H(+). The protein operates within amino-acid biosynthesis; L-histidine biosynthesis; L-histidine from 5-phospho-alpha-D-ribose 1-diphosphate: step 9/9. In terms of biological role, catalyzes the sequential NAD-dependent oxidations of L-histidinol to L-histidinaldehyde and then to L-histidine. In Xylella fastidiosa (strain 9a5c), this protein is Histidinol dehydrogenase.